Consider the following 353-residue polypeptide: Nicotinate-nucleotide--dimethylbenzimidazole phosphoribosyltransferase (353 aa).

Glu318 serves as the catalytic Proton acceptor.

Belongs to the CobT family.

It carries out the reaction 5,6-dimethylbenzimidazole + nicotinate beta-D-ribonucleotide = alpha-ribazole 5'-phosphate + nicotinate + H(+). It functions in the pathway nucleoside biosynthesis; alpha-ribazole biosynthesis; alpha-ribazole from 5,6-dimethylbenzimidazole: step 1/2. Its function is as follows. Catalyzes the synthesis of alpha-ribazole-5'-phosphate from nicotinate mononucleotide (NAMN) and 5,6-dimethylbenzimidazole (DMB). In Chloroflexus aggregans (strain MD-66 / DSM 9485), this protein is Nicotinate-nucleotide--dimethylbenzimidazole phosphoribosyltransferase.